Reading from the N-terminus, the 130-residue chain is Organic solute transporter subunit beta (130 aa).

Residues 1–35 are Extracellular-facing; sequence MNYSEKLTGAPPMTEVPLELLEEMLWFFRVEDATP. The chain crosses the membrane as a helical span at residues 36-56; the sequence is WNCSMFVLAALVAIISFILLG. Residues 57 to 130 are Cytoplasmic-facing; the sequence is RNIQANRNQK…HLPDPQEPES (74 aa). Residues 99–130 are disordered; that stretch reads LSEKPTLAQGEMEAKCSDVPRVHLPDPQEPES. Basic and acidic residues predominate over residues 110-124; it reads MEAKCSDVPRVHLPD.

It belongs to the OST-beta family. Interacts with SLC51A. The Ost-alpha/Ost-beta complex is a heterodimer composed of alpha (SLC51A) and beta (SLC51B) subunit; induces the transport of SLC51A from the endoplasmic reticulum to the plasma membrane.

The protein resides in the cell membrane. The enzyme catalyses taurocholate(out) = taurocholate(in). The catalysed reaction is estrone 3-sulfate(out) = estrone 3-sulfate(in). It catalyses the reaction dehydroepiandrosterone 3-sulfate(out) = dehydroepiandrosterone 3-sulfate(in). It carries out the reaction tauroursodeoxycholate(out) = tauroursodeoxycholate(in). The enzyme catalyses glycoursodeoxycholate(out) = glycoursodeoxycholate(in). The catalysed reaction is glycocholate(out) = glycocholate(in). It catalyses the reaction taurochenodeoxycholate(out) = taurochenodeoxycholate(in). It carries out the reaction glycochenodeoxycholate(out) = glycochenodeoxycholate(in). The enzyme catalyses taurodeoxycholate(out) = taurodeoxycholate(in). The catalysed reaction is glycodeoxycholate(out) = glycodeoxycholate(in). It catalyses the reaction prostaglandin E2(out) = prostaglandin E2(in). In terms of biological role, essential component of the Ost-alpha/Ost-beta complex, a heterodimer that acts as the intestinal basolateral transporter responsible for bile acid export from enterocytes into portal blood. The Ost-alpha/Ost-beta complex efficiently transports the major species of bile acids (taurocholate). Taurine conjugates are transported more efficiently across the basolateral membrane than glycine-conjugated bile acids. Can also transport steroids such as estrone 3-sulfate and dehydroepiandrosterone 3-sulfate, therefore playing a role in the enterohepatic circulation of sterols. Able to transport eicosanoids such as prostaglandin E2. Modulates SLC51A glycosylation, membrane trafficking and stability activities. The sequence is that of Organic solute transporter subunit beta (SLC51B) from Bos taurus (Bovine).